Reading from the N-terminus, the 307-residue chain is tRNA pseudouridine synthase B (307 aa).

Catalysis depends on aspartate 45, which acts as the Nucleophile.

Belongs to the pseudouridine synthase TruB family. Type 1 subfamily.

The enzyme catalyses uridine(55) in tRNA = pseudouridine(55) in tRNA. Responsible for synthesis of pseudouridine from uracil-55 in the psi GC loop of transfer RNAs. The protein is tRNA pseudouridine synthase B of Heliobacterium mobile (Heliobacillus mobilis).